We begin with the raw amino-acid sequence, 335 residues long: tRNA N6-adenosine threonylcarbamoyltransferase (335 aa).

Histidine 111 and histidine 115 together coordinate Fe cation. Residues 133–137, aspartate 166, glycine 179, and asparagine 276 contribute to the substrate site; that span reads LISGG. Fe cation is bound at residue aspartate 301.

The protein belongs to the KAE1 / TsaD family. Fe(2+) is required as a cofactor.

It is found in the cytoplasm. It catalyses the reaction L-threonylcarbamoyladenylate + adenosine(37) in tRNA = N(6)-L-threonylcarbamoyladenosine(37) in tRNA + AMP + H(+). Functionally, required for the formation of a threonylcarbamoyl group on adenosine at position 37 (t(6)A37) in tRNAs that read codons beginning with adenine. Is involved in the transfer of the threonylcarbamoyl moiety of threonylcarbamoyl-AMP (TC-AMP) to the N6 group of A37, together with TsaE and TsaB. TsaD likely plays a direct catalytic role in this reaction. In Wolbachia sp. subsp. Drosophila simulans (strain wRi), this protein is tRNA N6-adenosine threonylcarbamoyltransferase.